Reading from the N-terminus, the 168-residue chain is G/U mismatch-specific DNA glycosylase (168 aa).

This sequence belongs to the uracil-DNA glycosylase (UDG) superfamily. TDG/mug family. As to quaternary structure, binds DNA as a monomer.

It localises to the cytoplasm. It catalyses the reaction Specifically hydrolyzes mismatched double-stranded DNA and polynucleotides, releasing free uracil.. Functionally, excises ethenocytosine and uracil, which can arise by alkylation or deamination of cytosine, respectively, from the corresponding mispairs with guanine in ds-DNA. It is capable of hydrolyzing the carbon-nitrogen bond between the sugar-phosphate backbone of the DNA and the mispaired base. The complementary strand guanine functions in substrate recognition. Required for DNA damage lesion repair in stationary-phase cells. The sequence is that of G/U mismatch-specific DNA glycosylase from Escherichia coli (strain UTI89 / UPEC).